Reading from the N-terminus, the 257-residue chain is NAD-capped RNA hydrolase NudC (257 aa).

R69 provides a ligand contact to substrate. Positions 98 and 101 each coordinate Zn(2+). E111 is a binding site for substrate. Residues C116 and C119 each coordinate Zn(2+). Y124 provides a ligand contact to substrate. The 124-residue stretch at P125–T248 folds into the Nudix hydrolase domain. A divalent metal cation contacts are provided by A158, E174, and E178. The Nudix box motif lies at G159–G180. Substrate is bound at residue Q192–S199. Residue E219 participates in a divalent metal cation binding. A241 is a substrate binding site.

This sequence belongs to the Nudix hydrolase family. NudC subfamily. As to quaternary structure, homodimer. Requires Mg(2+) as cofactor. Mn(2+) serves as cofactor. Zn(2+) is required as a cofactor.

The enzyme catalyses a 5'-end NAD(+)-phospho-ribonucleoside in mRNA + H2O = a 5'-end phospho-adenosine-phospho-ribonucleoside in mRNA + beta-nicotinamide D-ribonucleotide + 2 H(+). It carries out the reaction NAD(+) + H2O = beta-nicotinamide D-ribonucleotide + AMP + 2 H(+). The catalysed reaction is NADH + H2O = reduced beta-nicotinamide D-ribonucleotide + AMP + 2 H(+). Functionally, mRNA decapping enzyme that specifically removes the nicotinamide adenine dinucleotide (NAD) cap from a subset of mRNAs by hydrolyzing the diphosphate linkage to produce nicotinamide mononucleotide (NMN) and 5' monophosphate mRNA. The NAD-cap is present at the 5'-end of some mRNAs and stabilizes RNA against 5'-processing. Has preference for mRNAs with a 5'-end purine. Catalyzes the hydrolysis of a broad range of dinucleotide pyrophosphates. This Salmonella dublin (strain CT_02021853) protein is NAD-capped RNA hydrolase NudC.